We begin with the raw amino-acid sequence, 512 residues long: Protein disulfide-isomerase (512 aa).

The first 24 residues, 1 to 24, serve as a signal peptide directing secretion; that stretch reads MAKNVAIFGLLFSLLLLVPSQIFA. The Thioredoxin 1 domain occupies 25–144; that stretch reads EESSTDAKEF…IVEYLKKQSG (120 aa). Active-site nucleophile residues include Cys-62 and Cys-65. A disulfide bridge links Cys-62 with Cys-65. N-linked (GlcNAc...) asparagine glycosylation is present at Asn-278. The Thioredoxin 2 domain maps to 357–485; it reads YKDGKVEPFV…IIEFIEKNKD (129 aa). Catalysis depends on nucleophile residues Cys-407 and Cys-410. Cysteines 407 and 410 form a disulfide. Over residues 487 to 496 the composition is skewed to basic and acidic residues; sequence TGAAHQEVEQ. Residues 487-512 are disordered; sequence TGAAHQEVEQPKAAAQPEAEQPKDEL. The Prevents secretion from ER signature appears at 509–512; sequence KDEL.

It belongs to the protein disulfide isomerase family.

The protein resides in the endoplasmic reticulum lumen. The catalysed reaction is Catalyzes the rearrangement of -S-S- bonds in proteins.. In terms of biological role, participates in the folding of proteins containing disulfide bonds, may be involved in glycosylation, prolyl hydroxylation and triglyceride transfer. The polypeptide is Protein disulfide-isomerase (PDI) (Medicago sativa (Alfalfa)).